A 1085-amino-acid polypeptide reads, in one-letter code: Error-prone DNA polymerase 2 (1085 aa).

The disordered stretch occupies residues 1040–1066 (AGRGDEFAHGGGGPDSRDRQKPVVPRD).

Belongs to the DNA polymerase type-C family. DnaE2 subfamily.

The protein resides in the cytoplasm. The catalysed reaction is DNA(n) + a 2'-deoxyribonucleoside 5'-triphosphate = DNA(n+1) + diphosphate. DNA polymerase involved in damage-induced mutagenesis and translesion synthesis (TLS). It is not the major replicative DNA polymerase. The chain is Error-prone DNA polymerase 2 from Agrobacterium fabrum (strain C58 / ATCC 33970) (Agrobacterium tumefaciens (strain C58)).